The sequence spans 264 residues: Undecaprenyl-diphosphatase (264 aa).

6 consecutive transmembrane segments (helical) span residues 41–61 (NLAF…VILW), 82–102 (YVIN…FFKD), 106–126 (AIFG…AALL), 140–160 (ISMK…LPGL), 213–233 (IPAL…CLAC), and 244–264 (KLIY…ITQL).

The protein belongs to the UppP family.

The protein resides in the cell inner membrane. The catalysed reaction is di-trans,octa-cis-undecaprenyl diphosphate + H2O = di-trans,octa-cis-undecaprenyl phosphate + phosphate + H(+). Its function is as follows. Catalyzes the dephosphorylation of undecaprenyl diphosphate (UPP). Confers resistance to bacitracin. The chain is Undecaprenyl-diphosphatase from Bacteroides thetaiotaomicron (strain ATCC 29148 / DSM 2079 / JCM 5827 / CCUG 10774 / NCTC 10582 / VPI-5482 / E50).